A 163-amino-acid chain; its full sequence is Glycine cleavage system H protein, mitochondrial (163 aa).

The N-terminal 34 residues, 1 to 34, are a transit peptide targeting the mitochondrion; it reads MALRMWASSAANALGVSCAPKSHLLPALSLSRCF. Residues 56–137 form the Lipoyl-binding domain; the sequence is VATIGITDHA…YEEGWMVKVK (82 aa). The residue at position 96 (Lys-96) is an N6-lipoyllysine.

Belongs to the GcvH family. The glycine cleavage system is composed of four proteins: P, T, L and H. Requires (R)-lipoate as cofactor.

It is found in the mitochondrion. In terms of biological role, the glycine cleavage system catalyzes the degradation of glycine. The H protein shuttles the methylamine group of glycine from the P protein to the T protein. In Mesembryanthemum crystallinum (Common ice plant), this protein is Glycine cleavage system H protein, mitochondrial (GDCSH).